We begin with the raw amino-acid sequence, 325 residues long: Elongation factor P--(R)-beta-lysine ligase (325 aa).

76-78 (SPE) contributes to the substrate binding site. ATP-binding positions include 100-102 (RNE) and Asn-109. Tyr-118 provides a ligand contact to substrate. Position 244–245 (244–245 (EL)) interacts with ATP. Glu-251 contributes to the substrate binding site. ATP is bound at residue Gly-300.

It belongs to the class-II aminoacyl-tRNA synthetase family. EpmA subfamily. In terms of assembly, homodimer.

The catalysed reaction is D-beta-lysine + L-lysyl-[protein] + ATP = N(6)-((3R)-3,6-diaminohexanoyl)-L-lysyl-[protein] + AMP + diphosphate + H(+). With EpmB is involved in the beta-lysylation step of the post-translational modification of translation elongation factor P (EF-P) on 'Lys-34'. Catalyzes the ATP-dependent activation of (R)-beta-lysine produced by EpmB, forming a lysyl-adenylate, from which the beta-lysyl moiety is then transferred to the epsilon-amino group of EF-P 'Lys-34'. This chain is Elongation factor P--(R)-beta-lysine ligase, found in Escherichia coli O139:H28 (strain E24377A / ETEC).